Here is a 1805-residue protein sequence, read N- to C-terminus: Cytadherence high molecular weight protein 2 (1805 aa).

Coiled-coil stretches lie at residues 28 to 838 (EKNR…NNAF), 914 to 1591 (ELKI…LRTQ), 1632 to 1723 (DNTL…QHNT), and 1777 to 1804 (NITK…KAAS).

In terms of biological role, component of the cytoskeleton-like structure which stabilizes the shape of the wall-less Mycoplasma. This cytoskeleton-like network of accessory proteins containing HMW proteins 1 to 5 allows the proper anchoring of cytadhesin proteins in the mycoplasmal membrane at the attachment organelle. The polypeptide is Cytadherence high molecular weight protein 2 (hmw2) (Mycoplasma genitalium (strain ATCC 33530 / DSM 19775 / NCTC 10195 / G37) (Mycoplasmoides genitalium)).